The primary structure comprises 115 residues: UPF0738 protein SACOL1009 (115 aa).

It belongs to the UPF0738 family.

This chain is UPF0738 protein SACOL1009, found in Staphylococcus aureus (strain COL).